The primary structure comprises 450 residues: Glucose-6-phosphate isomerase (450 aa).

Residue threonine 38 is modified to Phosphothreonine. Catalysis depends on glutamate 290, which acts as the Proton donor. Residues histidine 311 and lysine 425 contribute to the active site.

This sequence belongs to the GPI family.

It localises to the cytoplasm. The enzyme catalyses alpha-D-glucose 6-phosphate = beta-D-fructose 6-phosphate. The protein operates within carbohydrate biosynthesis; gluconeogenesis. Its pathway is carbohydrate degradation; glycolysis; D-glyceraldehyde 3-phosphate and glycerone phosphate from D-glucose: step 2/4. Functionally, catalyzes the reversible isomerization of glucose-6-phosphate to fructose-6-phosphate. The protein is Glucose-6-phosphate isomerase of Bacillus licheniformis (strain ATCC 14580 / DSM 13 / JCM 2505 / CCUG 7422 / NBRC 12200 / NCIMB 9375 / NCTC 10341 / NRRL NRS-1264 / Gibson 46).